Here is a 362-residue protein sequence, read N- to C-terminus: N5-carboxyaminoimidazole ribonucleotide synthase (362 aa).

ATP-binding positions include Arg-108, Lys-148, 153–159 (GYDGKGQ), 185–188 (EGFV), Glu-193, His-216, and 270–271 (NE). The 189-residue stretch at 112-300 (KQFLNESGIE…QFEQHIRAVA (189 aa)) folds into the ATP-grasp domain.

The protein belongs to the PurK/PurT family. In terms of assembly, homodimer.

It carries out the reaction 5-amino-1-(5-phospho-beta-D-ribosyl)imidazole + hydrogencarbonate + ATP = 5-carboxyamino-1-(5-phospho-D-ribosyl)imidazole + ADP + phosphate + 2 H(+). The protein operates within purine metabolism; IMP biosynthesis via de novo pathway; 5-amino-1-(5-phospho-D-ribosyl)imidazole-4-carboxylate from 5-amino-1-(5-phospho-D-ribosyl)imidazole (N5-CAIR route): step 1/2. Its function is as follows. Catalyzes the ATP-dependent conversion of 5-aminoimidazole ribonucleotide (AIR) and HCO(3)(-) to N5-carboxyaminoimidazole ribonucleotide (N5-CAIR). This Brucella melitensis biotype 1 (strain ATCC 23456 / CCUG 17765 / NCTC 10094 / 16M) protein is N5-carboxyaminoimidazole ribonucleotide synthase.